The sequence spans 27 residues: Omega-conotoxin RVIA (27 aa).

Intrachain disulfides connect C1–C16, C8–C19, and C15–C26. 4-hydroxyproline occurs at positions 4 and 7.

Belongs to the conotoxin O1 superfamily. In terms of tissue distribution, expressed by the venom duct.

The protein resides in the secreted. Omega-conotoxins act at presynaptic membranes, they bind and block voltage-gated calcium channels (Cav). This chain is Omega-conotoxin RVIA, found in Conus radiatus (Rayed cone).